A 502-amino-acid chain; its full sequence is Cytochrome P450 71B16 (502 aa).

The chain crosses the membrane as a helical span at residues 1 to 21; it reads MAISLLCLFLITLVSLIFVVK. Cysteine 444 lines the heme pocket.

This sequence belongs to the cytochrome P450 family. Heme serves as cofactor.

The protein resides in the membrane. This is Cytochrome P450 71B16 (CYP71B16) from Arabidopsis thaliana (Mouse-ear cress).